The chain runs to 461 residues: Cysteine--tRNA ligase (461 aa).

Cys28 contacts Zn(2+). A 'HIGH' region motif is present at residues Ile30–His40. Residues Cys209, His234, and Glu238 each coordinate Zn(2+). Residues Lys266–Ser270 carry the 'KMSKS' region motif. Lys269 contributes to the ATP binding site.

It belongs to the class-I aminoacyl-tRNA synthetase family. In terms of assembly, monomer. Zn(2+) is required as a cofactor.

The protein resides in the cytoplasm. The enzyme catalyses tRNA(Cys) + L-cysteine + ATP = L-cysteinyl-tRNA(Cys) + AMP + diphosphate. In Escherichia fergusonii (strain ATCC 35469 / DSM 13698 / CCUG 18766 / IAM 14443 / JCM 21226 / LMG 7866 / NBRC 102419 / NCTC 12128 / CDC 0568-73), this protein is Cysteine--tRNA ligase.